The chain runs to 125 residues: Large ribosomal subunit protein bL12 (125 aa).

It belongs to the bacterial ribosomal protein bL12 family. As to quaternary structure, homodimer. Part of the 50S ribosomal subunit; present in 6 copies per ribosome. Forms part of the ribosomal stalk which helps the ribosome interact with GTP-bound translation factors. Forms a heptameric L10(L12)2(L12)2(L12)2 complex, where L10 forms an elongated spine to which 3 L12 dimers bind in a sequential fashion.

In terms of biological role, forms part of the ribosomal stalk which helps the ribosome interact with GTP-bound translation factors. Is thus essential for accurate translation. This Agrobacterium fabrum (strain C58 / ATCC 33970) (Agrobacterium tumefaciens (strain C58)) protein is Large ribosomal subunit protein bL12.